Here is a 385-residue protein sequence, read N- to C-terminus: Putative nickel insertion protein (385 aa).

Belongs to the LarC family.

The protein is Putative nickel insertion protein of Citrifermentans bemidjiense (strain ATCC BAA-1014 / DSM 16622 / JCM 12645 / Bem) (Geobacter bemidjiensis).